The chain runs to 174 residues: Probable E3 ubiquitin-protein ligase RHA4A (174 aa).

Residues 105–147 (CCVCLGEFELKEELVEMPLCKHIFHLDCIHLWLYSHNTCPLCR) form an RING-type; atypical zinc finger. Residues 155 to 174 (TKTSVDDDNDHPDSPQTSPV) are disordered.

In terms of tissue distribution, expressed in stems, flowers, cauline leaves and roots.

It carries out the reaction S-ubiquitinyl-[E2 ubiquitin-conjugating enzyme]-L-cysteine + [acceptor protein]-L-lysine = [E2 ubiquitin-conjugating enzyme]-L-cysteine + N(6)-ubiquitinyl-[acceptor protein]-L-lysine.. The protein operates within protein modification; protein ubiquitination. Functionally, probable E3 ubiquitin-protein ligase that may possess E3 ubiquitin ligase activity in vitro. The sequence is that of Probable E3 ubiquitin-protein ligase RHA4A from Arabidopsis thaliana (Mouse-ear cress).